The following is a 286-amino-acid chain: 33 kDa chaperonin (286 aa).

Intrachain disulfides connect C225–C227 and C258–C261.

It belongs to the HSP33 family. Under oxidizing conditions two disulfide bonds are formed involving the reactive cysteines. Under reducing conditions zinc is bound to the reactive cysteines and the protein is inactive.

The protein localises to the cytoplasm. Its function is as follows. Redox regulated molecular chaperone. Protects both thermally unfolding and oxidatively damaged proteins from irreversible aggregation. Plays an important role in the bacterial defense system toward oxidative stress. This Shewanella putrefaciens (strain CN-32 / ATCC BAA-453) protein is 33 kDa chaperonin.